Here is a 235-residue protein sequence, read N- to C-terminus: Attacin-E (235 aa).

An N-terminal signal peptide occupies residues 1-19 (MFGKIVFLLLVALCAGVQS). A propeptide spanning residues 20–47 (RYLIVSEPVYYIEHYEEPELLASSRVRR) is cleaved from the precursor.

The protein belongs to the attacin/sarcotoxin-2 family. Post-translationally, attacin F appears to be derived by proteolytic digestion of attacin E.

Its subcellular location is the secreted. Hemolymph antibacterial protein. This chain is Attacin-E, found in Hyalophora cecropia (Cecropia moth).